The following is a 345-amino-acid chain: Phosphate acyltransferase (345 aa).

It belongs to the PlsX family. In terms of assembly, homodimer. Probably interacts with PlsY.

The protein resides in the cytoplasm. The catalysed reaction is a fatty acyl-[ACP] + phosphate = an acyl phosphate + holo-[ACP]. It functions in the pathway lipid metabolism; phospholipid metabolism. Catalyzes the reversible formation of acyl-phosphate (acyl-PO(4)) from acyl-[acyl-carrier-protein] (acyl-ACP). This enzyme utilizes acyl-ACP as fatty acyl donor, but not acyl-CoA. The protein is Phosphate acyltransferase of Trichlorobacter lovleyi (strain ATCC BAA-1151 / DSM 17278 / SZ) (Geobacter lovleyi).